We begin with the raw amino-acid sequence, 232 residues long: Large ribosomal subunit protein uL1 (232 aa).

This sequence belongs to the universal ribosomal protein uL1 family. In terms of assembly, part of the 50S ribosomal subunit.

Functionally, binds directly to 23S rRNA. The L1 stalk is quite mobile in the ribosome, and is involved in E site tRNA release. In terms of biological role, protein L1 is also a translational repressor protein, it controls the translation of the L11 operon by binding to its mRNA. The chain is Large ribosomal subunit protein uL1 from Maricaulis maris (strain MCS10) (Caulobacter maris).